The following is a 535-amino-acid chain: MRLRNGTVATVLVFITTFLSLSWYTAWQNGKEKLIAYQREFHALKERLRIAEHRTLQRSSELNAILEQFRRAVAETNGSKNALNNFSDETLKLLKELTSKKSLQVPNIYYHLPHLLKNEGSLQPSVQVGLGRTGVSIVMGIPTVKRKVKSYLTETLHSLIDKLSPEEKLDCVMVVFIGETDLDYVNNVVASLEKEFSTEINSGLVEVIAPPATYYPDLTNLKETFGDSKERVRWRTKQNLDYCFLMMYAQKKGVYYIQLEDDIVVKQNYFSTIKNFALQLASEDWMILEFSQLGFIGKMFQSPDITLIVEFIFMFYKEKPIDWLLDHILWVKVCNPEKDAKHCDRQKSNLRIRFRPSLFQHVGLHSSLAGKIQKLTDKDFLKPLLHKIHVNPPAEVSTSLKVYQGHTLEKTYVGEDFFWAVTPVAGDYILFKFDKPVNVERYLFHSGNPEHPGDILLNTTVEVLPFQNEELVLSKETKDKRLEDGYFRIGKFENGVAEGTVDPSLNPISSFRLSVIQNSAVWAILNEIHIKKMTN.

Topologically, residues 1–6 are cytoplasmic; that stretch reads MRLRNG. A helical; Signal-anchor for type II membrane protein membrane pass occupies residues 7–27; that stretch reads TVATVLVFITTFLSLSWYTAW. A coiled-coil region spans residues 28–54; the sequence is QNGKEKLIAYQREFHALKERLRIAEHR. The Lumenal portion of the chain corresponds to 28–535; the sequence is QNGKEKLIAY…NEIHIKKMTN (508 aa). Asn77, Asn85, and Asn458 each carry an N-linked (GlcNAc...) asparagine glycan.

This sequence belongs to the glycosyltransferase 54 family. A divalent metal cation is required as a cofactor. In terms of processing, N-glycosylated.

Its subcellular location is the golgi apparatus membrane. It is found in the secreted. The catalysed reaction is N(4)-{beta-D-GlcNAc-(1-&gt;2)-alpha-D-Man-(1-&gt;3)-[beta-D-GlcNAc-(1-&gt;2)-alpha-D-Man-(1-&gt;6)]-beta-D-Man-(1-&gt;4)-beta-D-GlcNAc-(1-&gt;4)-beta-D-GlcNAc}-L-asparaginyl-[protein] + UDP-N-acetyl-alpha-D-glucosamine = N(4)-{beta-D-GlcNAc-(1-&gt;2)-[beta-D-GlcNAc-(1-&gt;4)]-alpha-D-Man-(1-&gt;3)-[beta-D-GlcNAc-(1-&gt;2)-alpha-D-Man-(1-&gt;6)]-beta-D-Man-(1-&gt;4)-beta-D-GlcNAc-(1-&gt;4)-beta-D-GlcNAc}-L-asparaginyl-[protein] + UDP + H(+). It catalyses the reaction an N(4)-{beta-D-GlcNAc-(1-&gt;2)-alpha-D-Man-(1-&gt;3)-[alpha-D-Man-(1-&gt;6)]-beta-D-Man-(1-&gt;4)-beta-D-GlcNAc-(1-&gt;4)-beta-D-GlcNAc}-L-asparaginyl-[protein] + UDP-N-acetyl-alpha-D-glucosamine = an N(4)-{beta-D-GlcNAc-(1-&gt;2)-[beta-D-GlcNAc-(1-&gt;4)]-alpha-D-Man-(1-&gt;3)-[alpha-D-Man-(1-&gt;6)]-beta-D-Man-(1-&gt;4)-beta-D-GlcNAc-(1-&gt;4)-beta-D-GlcNAc}-L-asparaginyl-[protein] + UDP + H(+). The enzyme catalyses an N(4)-{beta-D-GlcNAc-(1-&gt;2)-alpha-D-Man-(1-&gt;3)-[beta-D-GlcNAc-(1-&gt;2)-[beta-D-GlcNAc-(1-&gt;6)]-alpha-D-Man-(1-&gt;6)]-beta-D-Man-(1-&gt;4)-beta-D-GlcNAc-(1-&gt;4)-beta-D-GlcNAc}-L-asparaginyl-[protein] + UDP-N-acetyl-alpha-D-glucosamine = an N(4)-{beta-D-GlcNAc-(1-&gt;2)-[beta-D-GlcNAc-(1-&gt;4)]-alpha-D-Man-(1-&gt;3)-[beta-D-GlcNAc-(1-&gt;2)-[beta-D-GlcNAc-(1-&gt;6)]-alpha-D-Man-(1-&gt;6)]-beta-D-Man-(1-&gt;4)-beta-D-GlcNAc-(1-&gt;4)-beta-D-GlcNAc}-L-asparaginyl-[protein] + UDP + H(+). It carries out the reaction an N(4)-{beta-D-GlcNAc-(1-&gt;2)-alpha-D-Man-(1-&gt;3)-[beta-D-GlcNAc-(1-&gt;2)-alpha-D-Man-(1-&gt;6)]-beta-D-Man-(1-&gt;4)-beta-D-GlcNAc-(1-&gt;4)-[alpha-L-Fuc-(1-&gt;6)]-beta-D-GlcNAc}-L-asparaginyl-[protein] + UDP-N-acetyl-alpha-D-glucosamine = N(4)-{beta-D-GlcNAc-(1-&gt;2)-[beta-D-GlcNAc-(1-&gt;4)]-alpha-D-Man-(1-&gt;3)-[beta-D-GlcNAc-(1-&gt;2)-alpha-D-Man-(1-&gt;6)]-beta-D-Man-(1-&gt;4)-beta-D-GlcNAc-(1-&gt;4)-[alpha-L-Fuc-(1-&gt;6)]-beta-D-GlcNAc}-asparaginyl-[protein] + UDP + H(+). The catalysed reaction is an N(4)-{beta-D-GlcNAc-(1-&gt;2)-alpha-D-Man-(1-&gt;3)-[beta-D-Gal-(1-&gt;4)-beta-D-GlcNAc-(1-&gt;2)-alpha-D-Man-(1-&gt;6)]-beta-D-Man-(1-&gt;4)-beta-D-GlcNAc-(1-&gt;4)-beta-D-GlcNAc}-L-asparaginyl-[protein] + UDP-N-acetyl-alpha-D-glucosamine = an N(4)-{beta-D-GlcNAc-(1-&gt;2)-[beta-D-GlcNAc-(1-&gt;4)]-alpha-D-Man-(1-&gt;3)-[beta-D-Gal-(1-&gt;4)-beta-D-GlcNAc-(1-&gt;2)-alpha-D-Man-(1-&gt;6)]-beta-D-Man-(1-&gt;4)-beta-D-GlcNAc-(1-&gt;4)-beta-D-GlcNAc}-L-asparaginyl-[protein] + UDP + H(+). It catalyses the reaction N(4)-{beta-D-GlcNAc-(1-&gt;2)-alpha-D-Man-(1-&gt;3)-[alpha-D-Man-(1-&gt;3)-{alpha-D-Man-(1-&gt;6)}-alpha-D-Man-(1-&gt;6)]-beta-D-Man-(1-&gt;4)-beta-D-GlcNAc-(1-&gt;4)-beta-D-GlcNAc}-asparaginyl-[protein] + UDP-N-acetyl-alpha-D-glucosamine = N(4)-{beta-D-GlcNAc-(1-&gt;2)-[beta-D-GlcNAc-(1-&gt;4)]-alpha-D-Man-(1-&gt;3)-[alpha-D-Man-(1-&gt;3)-{alpha-D-Man-(1-&gt;6)}-alpha-D-Man-(1-&gt;6)]-beta-D-Man-(1-&gt;4)-beta-D-GlcNAc-(1-&gt;4)-beta-D-GlcNAc}-asparaginyl-[protein] + UDP + H(+). The enzyme catalyses N(4)-{beta-D-GlcNAc-(1-&gt;2)-alpha-D-Man-(1-&gt;3)-beta-D-Man-(1-&gt;4)-beta-D-GlcNAc-(1-&gt;4)-beta-D-GlcNAc}-asparaginyl-[protein] + UDP-N-acetyl-alpha-D-glucosamine = N(4)-{beta-D-GlcNAc-(1-&gt;2)-[beta-D-GlcNAc-(1-&gt;4)]-alpha-D-Man-(1-&gt;3)-beta-D-Man-(1-&gt;4)-beta-D-GlcNAc-(1-&gt;4)-beta-D-GlcNAc}-asparaginyl-[protein] + UDP + H(+). Its pathway is protein modification; protein glycosylation. With respect to regulation, inhibited by UDP. Glycosyltransferase that catalyze the transfer of GlcNAc from UDP-GlcNAc to the GlcNAcbeta1-2Manalpha1-3 arm of the core structure of N-linked glycans through a beta1-4 linkage and participates in the production of tri- and tetra-antennary N-linked sugar chains. Involved in glucose transport by mediating SLC2A2/GLUT2 glycosylation, thereby controlling cell-surface expression of SLC2A2 in pancreatic beta cells. This is Alpha-1,3-mannosyl-glycoprotein 4-beta-N-acetylglucosaminyltransferase A from Gallus gallus (Chicken).